The sequence spans 267 residues: Chlorophyll a-b binding protein 3B, chloroplastic (267 aa).

The N-terminal 34 residues, 1 to 34, are a transit peptide targeting the chloroplast; it reads MAASTMALSSSTFAGKAVKLSPSSSEISGNGRIT. The disordered stretch occupies residues 19 to 52; that stretch reads KLSPSSSEISGNGRITMRKTAAKPKPASSGSPWX. Residues 153 to 173 traverse the membrane as a helical segment; that stretch reads LVHAQSILAIWACQVVLMGAV. The chlorophyll b site is built by valine 154, serine 158, glutamine 166, glutamate 174, arginine 177, and leucine 183. Chlorophyll a-binding residues include lysine 214, glutamate 215, asparagine 218, arginine 220, glutamine 232, histidine 247, and alanine 256. A helical membrane pass occupies residues 221–241; sequence LAMFSMFGFFVQAIVTGKGPL. Phenylalanine 263 provides a ligand contact to chlorophyll b.

It belongs to the light-harvesting chlorophyll a/b-binding (LHC) protein family. The LHC complex consists of chlorophyll a-b binding proteins. Binds at least 14 chlorophylls (8 Chl-a and 6 Chl-b) and carotenoids such as lutein and neoxanthin. serves as cofactor. Photoregulated by reversible phosphorylation of its threonine residues.

Its subcellular location is the plastid. It is found in the chloroplast thylakoid membrane. The light-harvesting complex (LHC) functions as a light receptor, it captures and delivers excitation energy to photosystems with which it is closely associated. The chain is Chlorophyll a-b binding protein 3B, chloroplastic (CAB3B) from Solanum lycopersicum (Tomato).